A 349-amino-acid polypeptide reads, in one-letter code: N-acetyltaurine hydrolase (349 aa).

Residues H26, H28, E169, H201, H230, and D298 each coordinate a divalent metal cation.

The protein belongs to the metallo-dependent hydrolases superfamily. Phosphotriesterase family. It depends on a divalent metal cation as a cofactor.

The protein localises to the cytoplasm. It is found in the cytosol. It catalyses the reaction N-acetyltaurine + H2O = taurine + acetate. It carries out the reaction N-propanoyltaurine + H2O = propanoate + taurine. The catalysed reaction is N-acetyl-L-methionine + H2O = L-methionine + acetate. The enzyme catalyses N-acetyl-L-isoleucine + H2O = L-isoleucine + acetate. It catalyses the reaction N-acetyl-L-leucine + H2O = L-leucine + acetate. It carries out the reaction N-acetyl-L-valine + H2O = L-valine + acetate. N-acetyltaurine hydrolase that regulates feeding by catalyzing the hydrolysis of N-acetyltaurine into taurine and acetate. N-acetyltaurine has anorexigenic and anti-obesity effects that are dependent on GFRAL receptor and GDF15. PTER also acts on other N-acetyl amino acids (Met, Ile, Leu, Val) and N-propionyltaurine, but at lower rates. This is N-acetyltaurine hydrolase (PTER) from Bos taurus (Bovine).